We begin with the raw amino-acid sequence, 176 residues long: Cystatin-related protein 2 (176 aa).

An N-terminal signal peptide occupies residues Met-1 to Ala-26. Positions Lys-27–Arg-30 are excised as a propeptide. Residue Asn-71 is glycosylated (N-linked (GlcNAc...) asparagine). 2 disulfide bridges follow: Cys-129–Cys-139 and Cys-153–Cys-173.

It belongs to the cystatin family. As to expression, prostate.

This chain is Cystatin-related protein 2 (Crp2), found in Rattus norvegicus (Rat).